A 245-amino-acid chain; its full sequence is Ubiquinone/menaquinone biosynthesis C-methyltransferase UbiE (245 aa).

Residues T71, D92, and 118-119 (DA) contribute to the S-adenosyl-L-methionine site.

Belongs to the class I-like SAM-binding methyltransferase superfamily. MenG/UbiE family.

The enzyme catalyses a 2-demethylmenaquinol + S-adenosyl-L-methionine = a menaquinol + S-adenosyl-L-homocysteine + H(+). It carries out the reaction a 2-methoxy-6-(all-trans-polyprenyl)benzene-1,4-diol + S-adenosyl-L-methionine = a 5-methoxy-2-methyl-3-(all-trans-polyprenyl)benzene-1,4-diol + S-adenosyl-L-homocysteine + H(+). It participates in quinol/quinone metabolism; menaquinone biosynthesis; menaquinol from 1,4-dihydroxy-2-naphthoate: step 2/2. Its pathway is cofactor biosynthesis; ubiquinone biosynthesis. Methyltransferase required for the conversion of demethylmenaquinol (DMKH2) to menaquinol (MKH2) and the conversion of 2-polyprenyl-6-methoxy-1,4-benzoquinol (DDMQH2) to 2-polyprenyl-3-methyl-6-methoxy-1,4-benzoquinol (DMQH2). This chain is Ubiquinone/menaquinone biosynthesis C-methyltransferase UbiE, found in Neisseria meningitidis serogroup C / serotype 2a (strain ATCC 700532 / DSM 15464 / FAM18).